The sequence spans 795 residues: Phenylalanine--tRNA ligase beta subunit (795 aa).

A tRNA-binding domain is found at 39–148 (AGSFNGVVVG…ADAPLGTDIR (110 aa)). One can recognise a B5 domain in the interval 401–476 (PKRATITLRR…RVYGYNNIPD (76 aa)). Mg(2+) is bound by residues D454, D460, E463, and E464. Positions 701 to 794 (SRFPANRRDI…LKERFQASLR (94 aa)) constitute an FDX-ACB domain.

It belongs to the phenylalanyl-tRNA synthetase beta subunit family. Type 1 subfamily. Tetramer of two alpha and two beta subunits. It depends on Mg(2+) as a cofactor.

It localises to the cytoplasm. The catalysed reaction is tRNA(Phe) + L-phenylalanine + ATP = L-phenylalanyl-tRNA(Phe) + AMP + diphosphate + H(+). This chain is Phenylalanine--tRNA ligase beta subunit, found in Salmonella paratyphi A (strain ATCC 9150 / SARB42).